The primary structure comprises 99 residues: Accessory protein p12I (99 aa).

The SH3-binding motif lies at 4-11; it reads RLLSPLSP. Residues 12-32 form a helical membrane-spanning segment; it reads LALTALLLFLLSPGEVSGLLL. Residues 33–38 carry the SH3-binding motif; sequence RPLPAP. Residues 48-68 traverse the membrane as a helical segment; it reads ILSNLLFLLFLPLFFSLPLLL. 2 short sequence motifs (SH3-binding) span residues 70–77 and 88–93; these read PSLPITMR and RAPSQP.

This sequence belongs to the HTLV-1 accessory protein p12I family. As to quaternary structure, p12I is a homodimer. Interacts with human CANX, CALR, ATP6V0C, IL2RB, IL2RG. Binds to MHC-I heavy chains HLA-A2, HLA-B7 and HLA-Cw4. In terms of processing, ubiquitinated; a fraction of P12I is degraded via the ubiquitin system.

The protein resides in the host endoplasmic reticulum membrane. It localises to the host Golgi apparatus. The protein localises to the host cis-Golgi network membrane. Functionally, p12I is a modulator of T-lymphocyte proliferation and immune function and may contribute to establish a persistent infection. Binds and down-modulates cell surface expression of interleukin-2 receptors IL2RB and IL2RG. Also down-modulates cell surface MHC-I molecules by binding to free immature MHC-I heavy chains in the ER and targeting them to the proteasome for degradation. Binding to IL2RB mediates recruitment of JAK1 and JAK3. As a result of this interaction, p12I increases DNA-binding and transcriptional activity of STAT5. This chain is Accessory protein p12I, found in Homo sapiens (Human).